We begin with the raw amino-acid sequence, 259 residues long: Tegument protein UL51 homolog (259 aa).

Cys9 carries S-palmitoyl cysteine; by host lipidation.

This sequence belongs to the herpesviridae UL51 family. In terms of assembly, oligomerizes. Interacts with ORF53; this interaction mediates ORF53 incorporation to virions. Post-translationally, phosphorylated. Palmitoylation is necessary for Golgi localization.

It is found in the virion tegument. The protein resides in the host cytoplasm. The protein localises to the host Golgi apparatus. Plays several roles during the time course of infection, including egress of virus particles from the perinuclear space and secondary envelopment of cytoplasmic capsids that bud into specific trans-Golgi network (TGN)-derived membranes. The polypeptide is Tegument protein UL51 homolog (Varicella-zoster virus (strain Dumas) (HHV-3)).